A 548-amino-acid chain; its full sequence is Copine-2 (548 aa).

C2 domains are found at residues 6–131 (DGGA…TRPL) and 138–263 (PAGK…PLEI). Ca(2+)-binding residues include aspartate 39, aspartate 45, aspartate 97, aspartate 99, serine 102, aspartate 109, aspartate 170, aspartate 176, aspartate 232, aspartate 234, and aspartate 240. The tract at residues 247–304 (TSVLQMSEARDGVPLEIECINPKKQRKKKSYKNSGIIILRSCKIHRNYSFLDYILGGC) is linker region. The region spanning 305–507 (QLMFTVGIDF…AARDIVQFVP (203 aa)) is the VWFA domain.

It belongs to the copine family. It depends on Ca(2+) as a cofactor.

The protein localises to the cytoplasm. Its subcellular location is the nucleus. It localises to the cell membrane. Functionally, calcium-dependent phospholipid-binding protein that plays a role in calcium-mediated intracellular processes. Exhibits calcium-dependent cell membrane binding properties. This chain is Copine-2, found in Mus musculus (Mouse).